A 347-amino-acid chain; its full sequence is N-acetyl-gamma-glutamyl-phosphate reductase (347 aa).

Residue C151 is part of the active site.

The protein belongs to the NAGSA dehydrogenase family. Type 1 subfamily.

The protein localises to the cytoplasm. It carries out the reaction N-acetyl-L-glutamate 5-semialdehyde + phosphate + NADP(+) = N-acetyl-L-glutamyl 5-phosphate + NADPH + H(+). It functions in the pathway amino-acid biosynthesis; L-arginine biosynthesis; N(2)-acetyl-L-ornithine from L-glutamate: step 3/4. Catalyzes the NADPH-dependent reduction of N-acetyl-5-glutamyl phosphate to yield N-acetyl-L-glutamate 5-semialdehyde. This chain is N-acetyl-gamma-glutamyl-phosphate reductase, found in Corynebacterium diphtheriae (strain ATCC 700971 / NCTC 13129 / Biotype gravis).